Consider the following 102-residue polypeptide: Monothiol glutaredoxin-S1 (102 aa).

The Glutaredoxin domain maps to 1-101 (MEKISNLLED…SLLRRAGAIW (101 aa)). Cysteine 21 serves as a coordination point for [2Fe-2S] cluster.

It belongs to the glutaredoxin family. CC-type subfamily.

The protein resides in the cytoplasm. May only reduce GSH-thiol disulfides, but not protein disulfides. In Arabidopsis thaliana (Mouse-ear cress), this protein is Monothiol glutaredoxin-S1 (GRXS1).